We begin with the raw amino-acid sequence, 490 residues long: Cytochrome P450 2C28 (490 aa).

Residue Ser-127 is modified to Phosphoserine. An N6-acetyllysine mark is found at Lys-249 and Lys-375. Cys-435 provides a ligand contact to heme.

This sequence belongs to the cytochrome P450 family. Requires heme as cofactor. As to expression, liver.

The protein resides in the endoplasmic reticulum membrane. It is found in the microsome membrane. The enzyme catalyses an organic molecule + reduced [NADPH--hemoprotein reductase] + O2 = an alcohol + oxidized [NADPH--hemoprotein reductase] + H2O + H(+). Functionally, catalyzes the N-demethylation of aminopyrine and benzphetamine, but does not catalyze the hydroxylation of tolbutamide, testosterone, and progesterone. This Mesocricetus auratus (Golden hamster) protein is Cytochrome P450 2C28 (CYP2C28).